The primary structure comprises 200 residues: Small ribosomal subunit protein uS4 (200 aa).

The interval 22–43 is disordered; the sequence is TGKELERRPYAPGQHGPTQRKK. Residues 92–170 enclose the S4 RNA-binding domain; that stretch reads QRLDNIVYRL…VPEYVTFDAE (79 aa).

The protein belongs to the universal ribosomal protein uS4 family. As to quaternary structure, part of the 30S ribosomal subunit. Contacts protein S5. The interaction surface between S4 and S5 is involved in control of translational fidelity.

One of the primary rRNA binding proteins, it binds directly to 16S rRNA where it nucleates assembly of the body of the 30S subunit. Its function is as follows. With S5 and S12 plays an important role in translational accuracy. The chain is Small ribosomal subunit protein uS4 from Listeria innocua serovar 6a (strain ATCC BAA-680 / CLIP 11262).